An 86-amino-acid chain; its full sequence is Electron transfer flavoprotein regulatory factor 1 (86 aa).

This sequence belongs to the complex I LYR family.

The protein resides in the mitochondrion. Its function is as follows. Acts as a regulator of the electron transfer flavoprotein by promoting the removal of flavin from the ETF holoenzyme (composed of ETFA and ETFB). This is Electron transfer flavoprotein regulatory factor 1 from Taeniopygia guttata (Zebra finch).